Consider the following 513-residue polypeptide: ATP synthase subunit alpha (513 aa).

ATP is bound at residue 169–176; it reads GDRQTGKT.

This sequence belongs to the ATPase alpha/beta chains family. As to quaternary structure, F-type ATPases have 2 components, CF(1) - the catalytic core - and CF(0) - the membrane proton channel. CF(1) has five subunits: alpha(3), beta(3), gamma(1), delta(1), epsilon(1). CF(0) has three main subunits: a(1), b(2) and c(9-12). The alpha and beta chains form an alternating ring which encloses part of the gamma chain. CF(1) is attached to CF(0) by a central stalk formed by the gamma and epsilon chains, while a peripheral stalk is formed by the delta and b chains.

Its subcellular location is the cell inner membrane. It carries out the reaction ATP + H2O + 4 H(+)(in) = ADP + phosphate + 5 H(+)(out). Functionally, produces ATP from ADP in the presence of a proton gradient across the membrane. The alpha chain is a regulatory subunit. The polypeptide is ATP synthase subunit alpha (Shewanella amazonensis (strain ATCC BAA-1098 / SB2B)).